We begin with the raw amino-acid sequence, 367 residues long: Uroporphyrinogen decarboxylase (367 aa).

Residues 27–31, Asp77, Tyr157, Thr212, and His333 contribute to the substrate site; that span reads RQAGR.

It belongs to the uroporphyrinogen decarboxylase family. In terms of assembly, homodimer.

The protein resides in the cytoplasm. It carries out the reaction uroporphyrinogen III + 4 H(+) = coproporphyrinogen III + 4 CO2. It functions in the pathway porphyrin-containing compound metabolism; protoporphyrin-IX biosynthesis; coproporphyrinogen-III from 5-aminolevulinate: step 4/4. Catalyzes the decarboxylation of four acetate groups of uroporphyrinogen-III to yield coproporphyrinogen-III. The sequence is that of Uroporphyrinogen decarboxylase from Cupriavidus metallidurans (strain ATCC 43123 / DSM 2839 / NBRC 102507 / CH34) (Ralstonia metallidurans).